Here is a 317-residue protein sequence, read N- to C-terminus: Acetyl-coenzyme A carboxylase carboxyl transferase subunit alpha (317 aa).

Positions 39–293 (KLEDKNRKLT…KDALGASLER (255 aa)) constitute a CoA carboxyltransferase C-terminal domain.

It belongs to the AccA family. Acetyl-CoA carboxylase is a heterohexamer composed of biotin carboxyl carrier protein (AccB), biotin carboxylase (AccC) and two subunits each of ACCase subunit alpha (AccA) and ACCase subunit beta (AccD).

The protein resides in the cytoplasm. It catalyses the reaction N(6)-carboxybiotinyl-L-lysyl-[protein] + acetyl-CoA = N(6)-biotinyl-L-lysyl-[protein] + malonyl-CoA. Its pathway is lipid metabolism; malonyl-CoA biosynthesis; malonyl-CoA from acetyl-CoA: step 1/1. Its function is as follows. Component of the acetyl coenzyme A carboxylase (ACC) complex. First, biotin carboxylase catalyzes the carboxylation of biotin on its carrier protein (BCCP) and then the CO(2) group is transferred by the carboxyltransferase to acetyl-CoA to form malonyl-CoA. This is Acetyl-coenzyme A carboxylase carboxyl transferase subunit alpha from Chromohalobacter salexigens (strain ATCC BAA-138 / DSM 3043 / CIP 106854 / NCIMB 13768 / 1H11).